We begin with the raw amino-acid sequence, 415 residues long: Squalene synthase 12 (415 aa).

The next 2 helical transmembrane spans lie at 281–301 (AIFR…ALCF) and 391–411 (LIAI…SNLL).

The protein belongs to the phytoene/squalene synthase family. Requires Mg(2+) as cofactor. Mn(2+) is required as a cofactor.

It is found in the endoplasmic reticulum membrane. It carries out the reaction 2 (2E,6E)-farnesyl diphosphate + NADH + H(+) = squalene + 2 diphosphate + NAD(+). The enzyme catalyses 2 (2E,6E)-farnesyl diphosphate + NADPH + H(+) = squalene + 2 diphosphate + NADP(+). The protein operates within terpene metabolism; lanosterol biosynthesis; lanosterol from farnesyl diphosphate: step 1/3. Functionally, component of the triterpene saponins (e.g. ginsenosides or panaxosides) and phytosterols biosynthetic pathways. Catalyzes the biosynthesis of squalene. The chain is Squalene synthase 12 from Panax ginseng (Korean ginseng).